Here is a 1018-residue protein sequence, read N- to C-terminus: Ubiquitin carboxyl-terminal hydrolase 35 (1018 aa).

Residues 441–926 enclose the USP domain; sequence IGLINLGNTC…TAYVLFYRQR (486 aa). The Nucleophile role is filled by Cys450. Disordered regions lie at residues 544-566 and 610-757; these read QKLK…STSV and RLGS…GSEG. A compositionally biased stretch (pro residues) spans 552 to 561; sequence PSPPEEPPAP. The residue at position 613 (Ser613) is a Phosphoserine. Basic and acidic residues-rich tracts occupy residues 673 to 691, 699 to 709, and 718 to 728; these read QEER…TEKE, STRGEGEREKE, and KVEKETEKEAE. His862 functions as the Proton acceptor in the catalytic mechanism. The interval 984-1011 is disordered; sequence HWGRGFDEDKDEDEGSPGGCNPAGGNGG. The span at 999-1011 shows a compositional bias: gly residues; the sequence is SPGGCNPAGGNGG.

The protein belongs to the peptidase C19 family. As to quaternary structure, homodimer (via C-terminal region). Interacts with HSP90AA1. Ubiquitinated by CHIP/STUB1 in an HSP90-dependent manner; leading to proteasomal degradation. This ubiquitination can be reversed through auto-deubiquitinating activity. In terms of tissue distribution, expressed in testis, pancreas and skeletal muscle.

It localises to the cytoplasm. It is found in the mitochondrion. It catalyses the reaction Thiol-dependent hydrolysis of ester, thioester, amide, peptide and isopeptide bonds formed by the C-terminal Gly of ubiquitin (a 76-residue protein attached to proteins as an intracellular targeting signal).. Functionally, deubiquitinase that plays a role in different processes including cell cycle regulation, mitophagy or endoplasmic reticulum stress. Inhibits TNFalpha-induced NF-kappa-B activation through stabilizing TNIP2 protein via deubiquitination. Plays an essential role during mitosis by deubiquitinating and thereby regulating the levels of Aurora B/AURKB protein. In addition, regulates the protein levels of other key component of the chromosomal passenger complex (CPC) such as survivin/BIRC5 or Borealin/CDCA8 by enhancing their stability. Regulates the degradation of mitochondria through the process of autophagy termed mitophagy. The sequence is that of Ubiquitin carboxyl-terminal hydrolase 35 (USP35) from Homo sapiens (Human).